Reading from the N-terminus, the 209-residue chain is Imidazole glycerol phosphate synthase subunit HisH (209 aa).

One can recognise a Glutamine amidotransferase type-1 domain in the interval 3–209 (KIGLIDYGMG…WINWLKKNKF (207 aa)). Catalysis depends on Cys81, which acts as the Nucleophile. Active-site residues include His185 and Glu187.

As to quaternary structure, heterodimer of HisH and HisF.

It localises to the cytoplasm. It carries out the reaction 5-[(5-phospho-1-deoxy-D-ribulos-1-ylimino)methylamino]-1-(5-phospho-beta-D-ribosyl)imidazole-4-carboxamide + L-glutamine = D-erythro-1-(imidazol-4-yl)glycerol 3-phosphate + 5-amino-1-(5-phospho-beta-D-ribosyl)imidazole-4-carboxamide + L-glutamate + H(+). It catalyses the reaction L-glutamine + H2O = L-glutamate + NH4(+). It functions in the pathway amino-acid biosynthesis; L-histidine biosynthesis; L-histidine from 5-phospho-alpha-D-ribose 1-diphosphate: step 5/9. IGPS catalyzes the conversion of PRFAR and glutamine to IGP, AICAR and glutamate. The HisH subunit catalyzes the hydrolysis of glutamine to glutamate and ammonia as part of the synthesis of IGP and AICAR. The resulting ammonia molecule is channeled to the active site of HisF. This is Imidazole glycerol phosphate synthase subunit HisH from Prochlorococcus marinus (strain NATL2A).